Reading from the N-terminus, the 345-residue chain is 3-hydroxy-5-methyl-1-naphthoate 3-O-methyltransferase (345 aa).

Residue aspartate 205 participates in S-adenosyl-L-methionine binding. The active-site Proton acceptor is the histidine 252.

The protein belongs to the class I-like SAM-binding methyltransferase superfamily. Cation-independent O-methyltransferase family.

The catalysed reaction is 3-hydroxy-5-methyl-1-naphthoate + S-adenosyl-L-methionine = 3-methoxy-5-methyl-1-naphthoate + S-adenosyl-L-homocysteine + H(+). It functions in the pathway antibiotic biosynthesis. Its activity is regulated as follows. Inhibited by different divalent cations, such as Mg(2+), Mn(2+), Fe(2+), Cu(2+) and Zn(2+). O-methyltransferase that mediates the formation of 3-methoxy-5-methyl-1-naphthoate from 3-hydroxy-5-methyl-1-naphthoate in the biosynthesis of the antitumor antibiotic azinomycin B. This chain is 3-hydroxy-5-methyl-1-naphthoate 3-O-methyltransferase, found in Streptomyces sahachiroi.